The following is a 212-amino-acid chain: Large ribosomal subunit protein uL3 (212 aa).

Q152 is subject to N5-methylglutamine.

This sequence belongs to the universal ribosomal protein uL3 family. As to quaternary structure, part of the 50S ribosomal subunit. Forms a cluster with proteins L14 and L19. Post-translationally, methylated by PrmB.

In terms of biological role, one of the primary rRNA binding proteins, it binds directly near the 3'-end of the 23S rRNA, where it nucleates assembly of the 50S subunit. This Marinomonas sp. (strain MWYL1) protein is Large ribosomal subunit protein uL3.